The following is an 883-amino-acid chain: Phosphoenolpyruvate carboxylase (883 aa).

Active-site residues include H138 and K546.

It belongs to the PEPCase type 1 family. The cofactor is Mg(2+).

The catalysed reaction is oxaloacetate + phosphate = phosphoenolpyruvate + hydrogencarbonate. In terms of biological role, forms oxaloacetate, a four-carbon dicarboxylic acid source for the tricarboxylic acid cycle. The chain is Phosphoenolpyruvate carboxylase from Escherichia fergusonii (strain ATCC 35469 / DSM 13698 / CCUG 18766 / IAM 14443 / JCM 21226 / LMG 7866 / NBRC 102419 / NCTC 12128 / CDC 0568-73).